A 231-amino-acid polypeptide reads, in one-letter code: Ribose-5-phosphate isomerase A (231 aa).

Residues 40–43, 93–96, and 106–109 contribute to the substrate site; these read TGST, DGAD, and KGGG. Catalysis depends on glutamate 115, which acts as the Proton acceptor. Lysine 133 lines the substrate pocket.

It belongs to the ribose 5-phosphate isomerase family. In terms of assembly, homodimer.

The catalysed reaction is aldehydo-D-ribose 5-phosphate = D-ribulose 5-phosphate. The protein operates within carbohydrate degradation; pentose phosphate pathway; D-ribose 5-phosphate from D-ribulose 5-phosphate (non-oxidative stage): step 1/1. In terms of biological role, catalyzes the reversible conversion of ribose-5-phosphate to ribulose 5-phosphate. The chain is Ribose-5-phosphate isomerase A from Escherichia coli O6:K15:H31 (strain 536 / UPEC).